An 85-amino-acid polypeptide reads, in one-letter code: Prosialokinin (85 aa).

Residues 1 to 23 (MNMFITVQIVIVLVLAVLSEAAS) form the signal peptide. Residues 24 to 74 (LPTATERKDAMDEGPNQSDEPEGSVADPSTKDDDYSDSLKQDEKYYKVRLL) constitute a propeptide that is removed on maturation. Positions 26-61 (TATERKDAMDEGPNQSDEPEGSVADPSTKDDDYSDS) are disordered. Basic and acidic residues predominate over residues 52-61 (STKDDDYSDS). The residue at position 84 (M84) is a Methionine amide.

The protein belongs to the tachykinin family. In terms of tissue distribution, expressed exclusively in the medial lobe of female salivary gland. Not detected in female carcass without head and salivary glands. Not detected in male tissues.

The protein localises to the secreted. In terms of biological role, vasodilatory peptide. Facilitates mosquito blood feeding on vertebrate host. Induces nitric oxide (NO) release in blood vessels through the activation of the nitric oxide synthase (NOS3). Enhances endothelial permeability and induces edema at the site of inoculation in the host. Induces host smooth muscle contraction. Down-regulates production of Th1 cytokines, such as IL2 and IFN-gamma (IFNG), in mouse splenocytes. Up-regulates production of Th2 cytokines, such as IL4 and IL10, in mouse splenocytes. Promotes recruitment of host leukocytes, especially neutrophils and CD8+ T cells, to the bite site. Modulates cytokine production by host macrophages. Modulates populations of monocytes/macrophages, plasmacytoid dendritic cells, B cells, CD4+ T cells, NK and NKT cells, shifting mammalian immunity towards Th2 responses. Functionally, (Microbial infection) Promotes Semliki Forest virus infection in the host. (Microbial infection) Does not affect Zika virus replication in the host. The sequence is that of Prosialokinin from Aedes aegypti (Yellowfever mosquito).